Reading from the N-terminus, the 379-residue chain is Wnt inhibitory factor 1 (379 aa).

Residues 1 to 28 (MARRRAFPAFALRLWSILPCLLLLRADA) form the signal peptide. Residues 38–177 (LWIDAHQARV…PQNAIFFKTC (140 aa)) form the WIF domain. A glycan (N-linked (GlcNAc...) asparagine) is linked at Asn88. Disulfide bonds link Cys140-Cys177, Cys182-Cys192, Cys186-Cys198, Cys200-Cys209, Cys214-Cys224, Cys218-Cys230, and Cys232-Cys241. EGF-like domains are found at residues 178–210 (QQAECPGGCRNGGFCNERRVCECPDGFYGPHCE), 211–242 (KALCIPRCMNGGLCVTPGFCICPPGFYGVNCD), 243–271 (KANCSTTCFNGGTCFYPGKCICPPGLEGE), 274–306 (ELSKCPQPCRNGGKCIGKSKCKCPKGYQGDLCS), and 307–338 (KPVCEPGCGAHGTCHEPNKCQCREGWHGRHCN). N-linked (GlcNAc...) asparagine glycosylation is present at Asn245. 8 cysteine pairs are disulfide-bonded: Cys246-Cys256, Cys250-Cys262, Cys278-Cys288, Cys282-Cys294, Cys296-Cys305, Cys310-Cys320, Cys314-Cys326, and Cys328-Cys337. Positions 348–379 (APRPAGAGLERHTPSLKKAEDRRDPPESNYIW) are disordered. Positions 356-373 (LERHTPSLKKAEDRRDPP) are enriched in basic and acidic residues.

In terms of assembly, interacts with MYOC. In terms of tissue distribution, expression highest in heart and lung. Lower in brain and eye.

The protein localises to the secreted. Its function is as follows. Binds to WNT proteins and inhibits their activities. May be involved in mesoderm segmentation. This Mus musculus (Mouse) protein is Wnt inhibitory factor 1 (Wif1).